The primary structure comprises 283 residues: Formamidopyrimidine-DNA glycosylase (283 aa).

Residue Pro2 is the Schiff-base intermediate with DNA of the active site. Glu3 acts as the Proton donor in catalysis. Lys61 functions as the Proton donor; for beta-elimination activity in the catalytic mechanism. DNA is bound by residues His94, Arg113, and Lys159. The segment at 245 to 279 adopts an FPG-type zinc-finger fold; the sequence is DAYGREGESCRRCGAVMRREKFMNRSSFYCPKCQP. Catalysis depends on Arg269, which acts as the Proton donor; for delta-elimination activity.

The protein belongs to the FPG family. As to quaternary structure, monomer. Zn(2+) serves as cofactor.

The catalysed reaction is Hydrolysis of DNA containing ring-opened 7-methylguanine residues, releasing 2,6-diamino-4-hydroxy-5-(N-methyl)formamidopyrimidine.. The enzyme catalyses 2'-deoxyribonucleotide-(2'-deoxyribose 5'-phosphate)-2'-deoxyribonucleotide-DNA = a 3'-end 2'-deoxyribonucleotide-(2,3-dehydro-2,3-deoxyribose 5'-phosphate)-DNA + a 5'-end 5'-phospho-2'-deoxyribonucleoside-DNA + H(+). Functionally, involved in base excision repair of DNA damaged by oxidation or by mutagenic agents. Acts as a DNA glycosylase that recognizes and removes damaged bases. Has a preference for oxidized purines, such as 7,8-dihydro-8-oxoguanine (8-oxoG). Has AP (apurinic/apyrimidinic) lyase activity and introduces nicks in the DNA strand. Cleaves the DNA backbone by beta-delta elimination to generate a single-strand break at the site of the removed base with both 3'- and 5'-phosphates. In Mycobacterium avium (strain 104), this protein is Formamidopyrimidine-DNA glycosylase.